The primary structure comprises 475 residues: ATP synthase subunit beta, chloroplastic (475 aa).

155-162 (GGAGVGKT) contributes to the ATP binding site.

It belongs to the ATPase alpha/beta chains family. As to quaternary structure, F-type ATPases have 2 components, CF(1) - the catalytic core - and CF(0) - the membrane proton channel. CF(1) has five subunits: alpha(3), beta(3), gamma(1), delta(1), epsilon(1). CF(0) has four main subunits: a(1), b(1), b'(1) and c(9-12).

It is found in the plastid. The protein localises to the chloroplast thylakoid membrane. The enzyme catalyses ATP + H2O + 4 H(+)(in) = ADP + phosphate + 5 H(+)(out). Functionally, produces ATP from ADP in the presence of a proton gradient across the membrane. The catalytic sites are hosted primarily by the beta subunits. The chain is ATP synthase subunit beta, chloroplastic from Guillardia theta (Cryptophyte).